Reading from the N-terminus, the 227-residue chain is Thymidylate kinase (227 aa).

7–14 contacts ATP; the sequence is GIEGSGKT.

It belongs to the thymidylate kinase family.

It carries out the reaction dTMP + ATP = dTDP + ADP. In terms of biological role, phosphorylation of dTMP to form dTDP in both de novo and salvage pathways of dTTP synthesis. The chain is Thymidylate kinase from Desulforapulum autotrophicum (strain ATCC 43914 / DSM 3382 / VKM B-1955 / HRM2) (Desulfobacterium autotrophicum).